Consider the following 112-residue polypeptide: S-adenosylmethionine decarboxylase proenzyme (112 aa).

Residue S62 is the Schiff-base intermediate with substrate; via pyruvic acid of the active site. Pyruvic acid (Ser); by autocatalysis is present on S62. Residue H67 is the Proton acceptor; for processing activity of the active site. C82 serves as the catalytic Proton donor; for catalytic activity.

This sequence belongs to the prokaryotic AdoMetDC family. Type 1 subfamily. Heterotetramer of two alpha and two beta chains arranged as a dimer of alpha/beta heterodimers. It depends on pyruvate as a cofactor. In terms of processing, is synthesized initially as an inactive proenzyme. Formation of the active enzyme involves a self-maturation process in which the active site pyruvoyl group is generated from an internal serine residue via an autocatalytic post-translational modification. Two non-identical subunits are generated from the proenzyme in this reaction, and the pyruvate is formed at the N-terminus of the alpha chain, which is derived from the carboxyl end of the proenzyme. The post-translation cleavage follows an unusual pathway, termed non-hydrolytic serinolysis, in which the side chain hydroxyl group of the serine supplies its oxygen atom to form the C-terminus of the beta chain, while the remainder of the serine residue undergoes an oxidative deamination to produce ammonia and the pyruvoyl group blocking the N-terminus of the alpha chain.

The catalysed reaction is S-adenosyl-L-methionine + H(+) = S-adenosyl 3-(methylsulfanyl)propylamine + CO2. Its pathway is amine and polyamine biosynthesis; S-adenosylmethioninamine biosynthesis; S-adenosylmethioninamine from S-adenosyl-L-methionine: step 1/1. Catalyzes the decarboxylation of S-adenosylmethionine to S-adenosylmethioninamine (dcAdoMet), the propylamine donor required for the synthesis of the polyamines spermine and spermidine from the diamine putrescine. The polypeptide is S-adenosylmethionine decarboxylase proenzyme (Archaeoglobus fulgidus (strain ATCC 49558 / DSM 4304 / JCM 9628 / NBRC 100126 / VC-16)).